We begin with the raw amino-acid sequence, 5634 residues long: Hemicentin-1 (5634 aa).

A signal peptide spans 1-21 (MIAQEVVHTVFLVALFRSSLA). One can recognise a VWFA domain in the interval 41–216 (TLAFVFDVTG…EVLKWVEEAV (176 aa)). Ig-like C2-type domains follow at residues 431–517 (PKVT…FDVS), 520–607 (PPII…VFLT), 612–697 (PKVT…STLR), 702–788 (PKLV…LTLD), 793–883 (PVFI…TTVT), 890–976 (PLIG…TSVA), 981–1067 (PSIQ…VQLT), 1072–1166 (PRVF…VKLS), 1171–1254 (PKIQ…AEVT), 1261–1353 (PSVE…YNLK), 1357–1446 (PPVI…FSVN), 1451–1540 (PSIL…IKLT), 1545–1633 (PSIK…FHVD), 1638–1723 (PTIE…REIK), 1732–1820 (PAVE…FEVT), 1825–1913 (PTIK…TQLH), 1918–2006 (PSLD…YSLQ), 2011–2096 (PSIS…RDID), 2103–2189 (PNIM…YNVN), 2194–2284 (PSIY…YNLQ), 2289–2378 (PSIT…YDLS), 2383–2472 (PSII…FGLS), 2477–2565 (PHIV…FRLN), 2570–2661 (PTIA…YEVK), 2665–2762 (PPII…VNIQ), 2765–2863 (PSFQ…YDVH), 2867–2958 (PPVI…FNLN), 2962–3050 (PPSV…VSLT), and 3055–3145 (PSIK…FHLN). 2 disulfides stabilise this stretch: Cys-451-Cys-499 and Cys-541-Cys-591. Thr-615 is a glycosylation site (O-linked (GalNAc...) threonine). 11 disulfides stabilise this stretch: Cys-633/Cys-681, Cys-723/Cys-772, Cys-814/Cys-867, Cys-911/Cys-960, Cys-1002/Cys-1051, Cys-1101/Cys-1150, Cys-1192/Cys-1240, Cys-1287/Cys-1337, Cys-1381/Cys-1430, Cys-1474/Cys-1524, and Cys-1568/Cys-1617. Residues Thr-1292 and Thr-1386 are each glycosylated (O-linked (GalNAc...) threonine). Thr-1639 is a glycosylation site (O-linked (GalNAc...) threonine). Disulfide bonds link Cys-1662–Cys-1711 and Cys-1755–Cys-1804. The O-linked (GalNAc...) threonine glycan is linked to Thr-1826. 14 cysteine pairs are disulfide-bonded: Cys-1847/Cys-1897, Cys-1941/Cys-1990, Cys-2032/Cys-2082, Cys-2124/Cys-2173, Cys-2217/Cys-2268, Cys-2313/Cys-2362, Cys-2407/Cys-2456, Cys-2500/Cys-2549, Cys-2596/Cys-2645, Cys-2695/Cys-2744, Cys-2798/Cys-2847, Cys-2893/Cys-2942, Cys-2985/Cys-3034, and Cys-3080/Cys-3129. O-linked (GalNAc...) threonine glycosylation occurs at Thr-3151. Ig-like C2-type domains follow at residues 3155-3227 (PETE…VASN), 3244-3334 (PSVA…FNLN), 3339-3428 (PKIR…YSLQ), 3433-3515 (PNMD…GEVS), 3526-3614 (PHIN…YLVR), 3619-3707 (PNIA…FNLT), 3712-3798 (PSIG…IDLQ), 3803-3891 (PSIA…VDLT), 3896-3982 (PTIA…VTLR), 3987-4073 (PVIQ…VKLN), 4077-4163 (PPVI…STLT), 4168-4252 (PRIQ…RIVT), 4259-4332 (PTFT…AENS), 4347-4434 (PPVF…MSLT), and 4439-4526 (PIIT…VIVQ). 8 disulfides stabilise this stretch: Cys-3172/Cys-3223, Cys-3267/Cys-3318, Cys-3363/Cys-3412, Cys-3456/Cys-3505, Cys-3549/Cys-3598, Cys-3642/Cys-3691, Cys-3733/Cys-3782, and Cys-3824/Cys-3875. Residue Thr-3897 is glycosylated (O-linked (GalNAc...) threonine). 25 disulfides stabilise this stretch: Cys-3917–Cys-3966, Cys-4008–Cys-4057, Cys-4099–Cys-4147, Cys-4189–Cys-4238, Cys-4280–Cys-4327, Cys-4370–Cys-4418, Cys-4460–Cys-4508, Cys-4540–Cys-4577, Cys-4544–Cys-4582, Cys-4555–Cys-4567, Cys-4597–Cys-4634, Cys-4601–Cys-4639, Cys-4612–Cys-4624, Cys-4654–Cys-4691, Cys-4658–Cys-4696, Cys-4669–Cys-4681, Cys-4711–Cys-4748, Cys-4715–Cys-4753, Cys-4726–Cys-4738, Cys-4768–Cys-4805, Cys-4772–Cys-4810, Cys-4783–Cys-4795, Cys-4825–Cys-4862, Cys-4829–Cys-4867, and Cys-4840–Cys-4852. A glycan (O-linked (GalNAc...) threonine) is linked at Thr-4379. TSP type-1 domains follow at residues 4528–4583 (HGGF…KLCP), 4585–4640 (DGHW…RPCP), 4642–4697 (HGVW…RHCP), 4699–4754 (DGRW…DPCP), 4756–4811 (HGNW…DMCP), and 4813–4868 (DGSW…QACP). In terms of domain architecture, Nidogen G2 beta-barrel spans 4870–5092 (GPQRARGSVI…SKGDRSNQCP (223 aa)). Positions 5106 to 5145 (DEDECTAGNPCSHTCHNAIGAYYCSCPKGLTIAADGRTCQ) constitute an EGF-like 1; calcium-binding domain. 3 cysteine pairs are disulfide-bonded: Cys-5110/Cys-5120, Cys-5116/Cys-5129, and Cys-5131/Cys-5144. An EGF-like 2; calcium-binding domain is found at 5146–5189 (DIDECALGGHTCRAGQDCDNTIGSYRCVVHCGTGFRRTSDGLSC). Residues 5191-5228 (DINECQESSPCHQRCFNVIGSFHCGCEAGYQLKGRKCI) form the EGF-like 3; calcium-binding domain. 3 disulfides stabilise this stretch: Cys-5195–Cys-5205, Cys-5201–Cys-5214, and Cys-5216–Cys-5227. The region spanning 5229–5269 (DVNECRQNVCRPDQHCKNTRGGYKCIDLCPSGMTKAENGTC) is the EGF-like 4; calcium-binding domain. One can recognise an EGF-like 5; calcium-binding domain in the interval 5271–5306 (DIDECKDGTHQCRYNQICENTRGSYRCACPRGYRSQ). 8 cysteine pairs are disulfide-bonded: Cys-5275–Cys-5288, Cys-5282–Cys-5297, Cys-5318–Cys-5329, Cys-5325–Cys-5338, Cys-5340–Cys-5353, Cys-5435–Cys-5445, Cys-5441–Cys-5454, and Cys-5456–Cys-5469. The region spanning 5314–5354 (DINECEQVPKPCAHQCSNSPGSFKCICLPGQQLLGDGKSCA) is the EGF-like 6; calcium-binding domain. Positions 5431-5470 (DIDECQNRDTCQHECKNTIGSYQCVCPPGYRLMLNGKTCQ) constitute an EGF-like 7; calcium-binding domain.

In the kidney, expressed in the glomerulus (at protein level). Expressed in whisker and hair follicles, eye, tongue, and splenic and lymph node conduits (at protein level). In the embryo, localizes to the cleavage furrow at the two-cell stage (at protein level). In neonatal skin, expressed throughout the dermis (at protein level). In adult skin, strongly concentrated at the dermal side of the basement membrane but not detectable in the deeper dermis. Shows tendon-specific localization at the myotendinous junction and is also detected in the perichondrium (at protein level). Expressed by chondrocytes residing in articular cartilage and the femoral growth plate of 52 week old mice (at protein level). Expressed in vascular endothelial cells in coronary arteries and sparsely in endocardial endothelium (at protein level). Expressed in skin, tongue, lung and eye. At 14.5 dpc, expressed in the vibrissae, dermis, forelimb, kidney, intestine, lung and iliac cartilage where expression is found mainly in mesenchymal cells.

Its subcellular location is the secreted. It is found in the extracellular space. It localises to the extracellular matrix. The protein localises to the basement membrane. The protein resides in the cytoplasm. Its subcellular location is the cell junction. It is found in the cleavage furrow. In terms of biological role, involved in transforming growth factor beta-mediated rearrangement of the podocyte cytoskeleton which includes reduction of F-actin fibers and broadening, flattening and elongation of podocytes. Plays a role in basement membrane organization. May promote cleavage furrow maturation during cytokinesis in preimplantation embryos. May play a role in the architecture of adhesive and flexible epithelial cell junctions. May play a role during myocardial remodeling by imparting an effect on cardiac fibroblast migration. This is Hemicentin-1 from Mus musculus (Mouse).